Here is a 1430-residue protein sequence, read N- to C-terminus: FYVE, RhoGEF and PH domain-containing protein 6 (1430 aa).

Positions 1–36 (MTSAAEIKKPPVAPKPKFVVANNKPAPPPIAPKPDI) are disordered. A compositionally biased stretch (low complexity) spans 15-24 (KPKFVVANNK). Ser-231 bears the Phosphoserine mark. Residues 330 to 351 (CVDTPSESTEEPGNSDSSSSCL) form a disordered region. A compositionally biased stretch (polar residues) spans 334 to 351 (PSESTEEPGNSDSSSSCL). Phosphoserine is present on Ser-515. A disordered region spans residues 516-538 (EELLEKSSYPSSEEKSSEKSLER). A compositionally biased stretch (basic and acidic residues) spans 527–538 (SEEKSSEKSLER). Phosphoserine occurs at positions 554, 605, 692, and 721. 2 disordered regions span residues 695–739 (NYSL…PYKS) and 800–869 (PDGQ…NGMK). The span at 728-739 (SRESSSQAPYKS) shows a compositional bias: polar residues. Positions 831 to 847 (PSDEEEIINSSDEDDVS) are enriched in acidic residues. Residues 851 to 868 (SKGEPDPLEDKQDEDNGM) show a composition bias toward basic and acidic residues. In terms of domain architecture, DH spans 871–1060 (KVHHIAKEIM…IEVANHANDT (190 aa)). The 95-residue stretch at 1089–1183 (VFLKEGILMK…WLEAISRAIE (95 aa)) folds into the PH 1 domain. Position 1197 is a phosphoserine (Ser-1197). The FYVE-type zinc-finger motif lies at 1222–1281 (DTRATMCMICTSEFTLTWRRHHCRACGKIVCQACSSNKYGLDYLKNQPARVCEHCFQELQ). Zn(2+) contacts are provided by Cys-1228, Cys-1231, Cys-1244, Cys-1247, Cys-1252, Cys-1255, Cys-1273, and Cys-1276. Residues 1333-1429 (DSSMSGYLYR…WIEAFQEGTI (97 aa)) enclose the PH 2 domain.

Its subcellular location is the cytoplasm. It localises to the cytoskeleton. Functionally, may activate CDC42, a member of the Ras-like family of Rho- and Rac proteins, by exchanging bound GDP for free GTP. May play a role in regulating the actin cytoskeleton and cell shape. This chain is FYVE, RhoGEF and PH domain-containing protein 6 (FGD6), found in Homo sapiens (Human).